The primary structure comprises 382 residues: Fetuin-B (382 aa).

Residues 1–15 form the signal peptide; sequence MGLLLPLALCILVLC. Cystatin fetuin-B-type domains follow at residues 25–138 and 149–255; these read ALNP…YNCT and MTCP…VTCD. N-linked (GlcNAc...) asparagine glycosylation is present at asparagine 37. Cystine bridges form between cysteine 93/cysteine 104, cysteine 117/cysteine 137, and cysteine 151/cysteine 154. An N-linked (GlcNAc...) asparagine glycan is attached at asparagine 136. The N-linked (GlcNAc...) asparagine glycan is linked to asparagine 182. 2 disulfide bridges follow: cysteine 216–cysteine 224 and cysteine 237–cysteine 254. Composition is skewed to polar residues over residues 262-276 and 286-295; these read PATGSENSAVNQKPT and QKNTPPTDSP. Disordered regions lie at residues 262–320 and 363–382; these read PATG…EKGP and ARTAECPGPAQNASPLVLPP. Threonine 289 and threonine 292 each carry an O-linked (GalNAc...) threonine glycan. The span at 310 to 320 shows a compositional bias: basic and acidic residues; that stretch reads LDDKNSQEKGP. At serine 315 the chain carries Phosphoserine.

The protein belongs to the fetuin family. Liver and testis.

The protein resides in the secreted. In terms of biological role, protease inhibitor required for egg fertilization. Required to prevent premature zona pellucida hardening before fertilization, probably by inhibiting the protease activity of ASTL, a protease that mediates the cleavage of ZP2 and triggers zona pellucida hardening. The protein is Fetuin-B (FETUB) of Homo sapiens (Human).